The primary structure comprises 125 residues: Small ribosomal subunit protein uS12 (125 aa).

The residue at position 89 (aspartate 89) is a 3-methylthioaspartic acid.

It belongs to the universal ribosomal protein uS12 family. As to quaternary structure, part of the 30S ribosomal subunit. Contacts proteins S8 and S17. May interact with IF1 in the 30S initiation complex.

Its function is as follows. With S4 and S5 plays an important role in translational accuracy. In terms of biological role, interacts with and stabilizes bases of the 16S rRNA that are involved in tRNA selection in the A site and with the mRNA backbone. Located at the interface of the 30S and 50S subunits, it traverses the body of the 30S subunit contacting proteins on the other side and probably holding the rRNA structure together. The combined cluster of proteins S8, S12 and S17 appears to hold together the shoulder and platform of the 30S subunit. The chain is Small ribosomal subunit protein uS12 from Cupriavidus necator (strain ATCC 17699 / DSM 428 / KCTC 22496 / NCIMB 10442 / H16 / Stanier 337) (Ralstonia eutropha).